We begin with the raw amino-acid sequence, 555 residues long: Urocanate hydratase (555 aa).

NAD(+)-binding positions include 51-52, Gln129, 175-177, Glu195, 241-242, 262-266, 272-273, and Tyr321; these read GG, GMG, NA, QTSAH, and YL. The active site involves Cys409. Position 491 (Gly491) interacts with NAD(+).

This sequence belongs to the urocanase family. NAD(+) is required as a cofactor.

The protein localises to the cytoplasm. The catalysed reaction is 4-imidazolone-5-propanoate = trans-urocanate + H2O. Its pathway is amino-acid degradation; L-histidine degradation into L-glutamate; N-formimidoyl-L-glutamate from L-histidine: step 2/3. Its function is as follows. Catalyzes the conversion of urocanate to 4-imidazolone-5-propionate. The sequence is that of Urocanate hydratase from Hyphomonas neptunium (strain ATCC 15444).